Reading from the N-terminus, the 854-residue chain is Discoidin domain-containing receptor 2 (854 aa).

A signal peptide spans 1 to 21; it reads MIPIPRMPLVLLLLLLILGSA. Over 22–399 the chain is Extracellular; that stretch reads KAQVNPAICR…MLKVDDSNTR (378 aa). One can recognise an F5/8 type C domain in the interval 30 to 185; sequence CRYPLGMSGG…VCMRVELYGC (156 aa). Intrachain disulfides connect cysteine 30-cysteine 185 and cysteine 73-cysteine 177. N-linked (GlcNAc...) asparagine glycans are attached at residues asparagine 121, asparagine 213, asparagine 261, asparagine 280, and asparagine 372. Residues 400 to 421 form a helical membrane-spanning segment; the sequence is ILIGCLVAIIFILLAIIVIILW. Topologically, residues 422-854 are cytoplasmic; the sequence is RQFWQKMLEK…HLLLLQQGAE (433 aa). A disordered region spans residues 452 to 471; the sequence is SMFNNNRSSSPSEQESNSTY. Low complexity predominate over residues 455 to 469; sequence NNNRSSSPSEQESNS. Tyrosine 471 carries the post-translational modification Phosphotyrosine; by SRC and autocatalysis. The region spanning 563–848 is the Protein kinase domain; sequence LAFKEKLGEG…PSFQEIHLLL (286 aa). ATP-binding positions include 569 to 577 and lysine 608; that span reads LGEGQFGEV. The active-site Proton acceptor is the aspartate 709. Residues tyrosine 735, tyrosine 739, and tyrosine 740 each carry the phosphotyrosine; by SRC and autocatalysis modification.

This sequence belongs to the protein kinase superfamily. Tyr protein kinase family. Insulin receptor subfamily. As to quaternary structure, binds hydroxyproline-rich sequence motifs in fibrillar, glycosylated collagen, such as the GQOGVMGFO motif, where O stands for hydroxyproline. Interacts with SRC. Interacts (tyrosine phosphorylated) with SHC1. N-glycosylated. In terms of processing, tyrosine phosphorylated in response to collagen binding. Phosphorylated by SRC; this is required for activation and subsequent autophosphorylation on additional tyrosine residues. As to expression, widely expressed. Detected in lung, ovary, skin and in testis Leydig cells (at protein level). Widely expressed. Detected at high levels in heart, lung, skeletal muscle, central nervous system (CNS) and kidney, and at lower levels in brain and testis. Detected in chondrocytes in tibia growth plates of young mice.

It localises to the cell membrane. It catalyses the reaction L-tyrosyl-[protein] + ATP = O-phospho-L-tyrosyl-[protein] + ADP + H(+). Its activity is regulated as follows. Present in an inactive state in the absence of collagen binding and phosphorylation by SRC. Tyrosine phosphorylation enhances the affinity for ATP and the catalytic activity. Its function is as follows. Tyrosine kinase that functions as a cell surface receptor for fibrillar collagen and regulates cell differentiation, remodeling of the extracellular matrix, cell migration and cell proliferation. Required for normal bone development. Regulates osteoblast differentiation and chondrocyte maturation via a signaling pathway that involves MAP kinases and leads to the activation of the transcription factor RUNX2. Regulates remodeling of the extracellular matrix by up-regulation of the collagenases MMP1, MMP2 and MMP13, and thereby facilitates cell migration and tumor cell invasion. Promotes fibroblast migration and proliferation, and thereby contributes to cutaneous wound healing. This Mus musculus (Mouse) protein is Discoidin domain-containing receptor 2 (Ddr2).